Reading from the N-terminus, the 195-residue chain is HTH-type transcriptional regulator BetI (195 aa).

Positions P8–L68 constitute an HTH tetR-type domain. The segment at residues T31–F50 is a DNA-binding region (H-T-H motif).

It participates in amine and polyamine biosynthesis; betaine biosynthesis via choline pathway [regulation]. Functionally, repressor involved in the biosynthesis of the osmoprotectant glycine betaine. It represses transcription of the choline transporter BetT and the genes of BetAB involved in the synthesis of glycine betaine. This is HTH-type transcriptional regulator BetI from Klebsiella pneumoniae (strain 342).